A 138-amino-acid chain; its full sequence is Acidic phospholipase A2 Ts-A3 (138 aa).

The signal sequence occupies residues 1–16; that stretch reads MRTLWIMAVLLLGVEG. 7 cysteine pairs are disulfide-bonded: Cys-42–Cys-132, Cys-44–Cys-60, Cys-59–Cys-111, Cys-65–Cys-138, Cys-66–Cys-104, Cys-73–Cys-97, and Cys-91–Cys-102. 3 residues coordinate Ca(2+): Tyr-43, Gly-45, and Gly-47. His-63 is a catalytic residue. Asp-64 lines the Ca(2+) pocket. Asp-105 is a catalytic residue.

Ca(2+) is required as a cofactor. As to expression, expressed by the venom gland.

The protein localises to the secreted. The catalysed reaction is a 1,2-diacyl-sn-glycero-3-phosphocholine + H2O = a 1-acyl-sn-glycero-3-phosphocholine + a fatty acid + H(+). In terms of biological role, snake venom phospholipase A2 (PLA2) that shows a moderate inhibition of ADP-induced human platelet aggregation when tested on platelet rich plasma. Exhibits high hydrolytic activities and prefers the anionic micelles (dPPC with deoxycholate) to the zwitterionic micelles (dPPC with Triton X-100). PLA2 catalyzes the calcium-dependent hydrolysis of the 2-acyl groups in 3-sn-phosphoglycerides. This Trimeresurus stejnegeri (Chinese green tree viper) protein is Acidic phospholipase A2 Ts-A3.